We begin with the raw amino-acid sequence, 408 residues long: Solute carrier family 35 member F1 (408 aa).

The disordered stretch occupies residues 1-20 (MIPPEPPQPQLQPPPPPAPP). 10 consecutive transmembrane segments (helical) span residues 60–80 (MLISVALGQVLSLLVCGIGLT), 94–114 (VFQSFLNYILLFLVYTTTLAV), 129–147 (WWKYMILGLIDLEANYLVV), 159–179 (QLLDCFVIPVVILLSWFFLLI), 186–206 (FIGIVVCILGMGCMVGADVLV), 221–241 (LLVLGGATLYGISNVWEESII), 247–267 (VEFLGMIGLFGAFFSGIQLAI), 284–304 (LLYVGFSACMFGLYSFMPVVI), 311–331 (SVNLSLLTADLYSLFCGLFLF), and 335–355 (FSGLYLLSFFTILIGLVLYSS).

Belongs to the SLC35F solute transporter family.

It localises to the cytoplasmic vesicle. Its subcellular location is the secretory vesicle. The protein localises to the synaptic vesicle membrane. Putative solute transporter. This is Solute carrier family 35 member F1 (Slc35f1) from Mus musculus (Mouse).